The sequence spans 389 residues: Tryptophan synthase beta chain 1 (389 aa).

Lys84 is modified (N6-(pyridoxal phosphate)lysine).

The protein belongs to the TrpB family. Tetramer of two alpha and two beta chains. Pyridoxal 5'-phosphate serves as cofactor.

Its subcellular location is the plastid. The protein localises to the chloroplast. It catalyses the reaction (1S,2R)-1-C-(indol-3-yl)glycerol 3-phosphate + L-serine = D-glyceraldehyde 3-phosphate + L-tryptophan + H2O. Its pathway is amino-acid biosynthesis; L-tryptophan biosynthesis; L-tryptophan from chorismate: step 5/5. Functionally, the beta subunit is responsible for the synthesis of L-tryptophan from indole and L-serine. The chain is Tryptophan synthase beta chain 1 (TSB1) from Zea mays (Maize).